Consider the following 150-residue polypeptide: Large ribosomal subunit protein bL9 (150 aa).

It belongs to the bacterial ribosomal protein bL9 family.

Functionally, binds to the 23S rRNA. This chain is Large ribosomal subunit protein bL9, found in Alteromonas mediterranea (strain DSM 17117 / CIP 110805 / LMG 28347 / Deep ecotype).